The sequence spans 282 residues: MLLAIPSKGRLQEPTLRLLEAVGIKPLASDERALVLPTSWNDVNIIKARPEDIPYLVDSGRIWAGITGHDYIIESGSNVVEVLDLEFGKGKLVVAVPKTSGIKSIDELPPGARVATKFVNIAYNYFAELGKRVRIVRVAGSVEILPQLGIADAILDVMATGTTLEIHGLTPIATVLETSARLIVHPNYVNHELTKKLVTFIKGYYAAQGRKMIFLNVPATKLEDVLSILPAMEAPSVTKLAKGDVYEVFSVVPEDILPDLVMKLKNAGAKDIVVTSIEKLIS.

It belongs to the ATP phosphoribosyltransferase family. Long subfamily. Mg(2+) is required as a cofactor.

Its subcellular location is the cytoplasm. It catalyses the reaction 1-(5-phospho-beta-D-ribosyl)-ATP + diphosphate = 5-phospho-alpha-D-ribose 1-diphosphate + ATP. The protein operates within amino-acid biosynthesis; L-histidine biosynthesis; L-histidine from 5-phospho-alpha-D-ribose 1-diphosphate: step 1/9. Feedback inhibited by histidine. In terms of biological role, catalyzes the condensation of ATP and 5-phosphoribose 1-diphosphate to form N'-(5'-phosphoribosyl)-ATP (PR-ATP). Has a crucial role in the pathway because the rate of histidine biosynthesis seems to be controlled primarily by regulation of HisG enzymatic activity. This Pyrobaculum islandicum (strain DSM 4184 / JCM 9189 / GEO3) protein is ATP phosphoribosyltransferase.